We begin with the raw amino-acid sequence, 395 residues long: ATP synthase subunit beta, chloroplastic (395 aa).

72-79 (GGAGVGKT) contacts ATP.

The protein belongs to the ATPase alpha/beta chains family. F-type ATPases have 2 components, CF(1) - the catalytic core - and CF(0) - the membrane proton channel. CF(1) has five subunits: alpha(3), beta(3), gamma(1), delta(1), epsilon(1). CF(0) has four main subunits: a(1), b(1), b'(1) and c(9-12).

Its subcellular location is the plastid. The protein resides in the chloroplast thylakoid membrane. The catalysed reaction is ATP + H2O + 4 H(+)(in) = ADP + phosphate + 5 H(+)(out). Produces ATP from ADP in the presence of a proton gradient across the membrane. The catalytic sites are hosted primarily by the beta subunits. The protein is ATP synthase subunit beta, chloroplastic of Blechnum occidentale (Hammock fern).